The following is a 160-amino-acid chain: Transcription elongation factor GreA (160 aa).

The stretch at 49-75 (SEYDEAKNDQAFTEGRIIQLENMLKNA) forms a coiled coil.

This sequence belongs to the GreA/GreB family.

Necessary for efficient RNA polymerase transcription elongation past template-encoded arresting sites. The arresting sites in DNA have the property of trapping a certain fraction of elongating RNA polymerases that pass through, resulting in locked ternary complexes. Cleavage of the nascent transcript by cleavage factors such as GreA or GreB allows the resumption of elongation from the new 3'terminus. GreA releases sequences of 2 to 3 nucleotides. The chain is Transcription elongation factor GreA from Clostridium beijerinckii (strain ATCC 51743 / NCIMB 8052) (Clostridium acetobutylicum).